The sequence spans 338 residues: Ketol-acid reductoisomerase (NADP(+)) (338 aa).

Residues threonine 2–threonine 182 form the KARI N-terminal Rossmann domain. NADP(+) is bound by residues tyrosine 25–glutamine 28, serine 51, serine 53, and aspartate 83–glutamine 86. Histidine 108 is an active-site residue. Glycine 134 is an NADP(+) binding site. Positions threonine 183–asparagine 330 constitute a KARI C-terminal knotted domain. Residues aspartate 191, glutamate 195, glutamate 227, and glutamate 231 each contribute to the Mg(2+) site. Serine 252 provides a ligand contact to substrate.

This sequence belongs to the ketol-acid reductoisomerase family. Requires Mg(2+) as cofactor.

The enzyme catalyses (2R)-2,3-dihydroxy-3-methylbutanoate + NADP(+) = (2S)-2-acetolactate + NADPH + H(+). It catalyses the reaction (2R,3R)-2,3-dihydroxy-3-methylpentanoate + NADP(+) = (S)-2-ethyl-2-hydroxy-3-oxobutanoate + NADPH + H(+). The protein operates within amino-acid biosynthesis; L-isoleucine biosynthesis; L-isoleucine from 2-oxobutanoate: step 2/4. It participates in amino-acid biosynthesis; L-valine biosynthesis; L-valine from pyruvate: step 2/4. Involved in the biosynthesis of branched-chain amino acids (BCAA). Catalyzes an alkyl-migration followed by a ketol-acid reduction of (S)-2-acetolactate (S2AL) to yield (R)-2,3-dihydroxy-isovalerate. In the isomerase reaction, S2AL is rearranged via a Mg-dependent methyl migration to produce 3-hydroxy-3-methyl-2-ketobutyrate (HMKB). In the reductase reaction, this 2-ketoacid undergoes a metal-dependent reduction by NADPH to yield (R)-2,3-dihydroxy-isovalerate. This chain is Ketol-acid reductoisomerase (NADP(+)), found in Clostridium botulinum (strain Eklund 17B / Type B).